The following is a 346-amino-acid chain: Transcription factor 19 (346 aa).

One can recognise an FHA domain in the interval 31–88; that stretch reads YRLGCRADLCDVALRPQQEPGFISEVHAELHAERRGDDWRVSLEDHSSQGTLVNNVRL. Ser78 bears the Phosphoserine mark. 2 disordered regions span residues 136–168 and 190–289; these read PRSR…TLSP and LTFS…AAGG. Positions 138–147 are enriched in basic and acidic residues; it reads SRGEEGETRA. A compositionally biased stretch (polar residues) spans 190-208; that stretch reads LTFSRSGSGPQNPPVSTTP. Over residues 250 to 260 the composition is skewed to basic and acidic residues; sequence EPRKKLLRVEK. The PHD-type zinc finger occupies 294 to 343; it reads AAPCCCLPQEETVAWVQCDGCDTWFHVACVGCSIQAAKEADFRCPGCRVG. Zn(2+) contacts are provided by Cys297, Cys299, Cys311, Cys314, His319, Cys322, Cys337, and Cys340.

It is found in the nucleus. Functionally, potential transcription factor that may play a role in the regulation of genes involved in cell cycle G1/S transition. May bind to regulatory elements of genes, including the promoter of the transcription factor FOXO1. This is Transcription factor 19 (TCF19) from Sus scrofa (Pig).